Here is a 370-residue protein sequence, read N- to C-terminus: Chorismate synthase (370 aa).

R48 lines the NADP(+) pocket. FMN is bound by residues 125–127 (RSS), 241–242 (NA), G286, 301–305 (KPTSS), and R327.

It belongs to the chorismate synthase family. As to quaternary structure, homotetramer. FMNH2 serves as cofactor.

It catalyses the reaction 5-O-(1-carboxyvinyl)-3-phosphoshikimate = chorismate + phosphate. It functions in the pathway metabolic intermediate biosynthesis; chorismate biosynthesis; chorismate from D-erythrose 4-phosphate and phosphoenolpyruvate: step 7/7. Its function is as follows. Catalyzes the anti-1,4-elimination of the C-3 phosphate and the C-6 proR hydrogen from 5-enolpyruvylshikimate-3-phosphate (EPSP) to yield chorismate, which is the branch point compound that serves as the starting substrate for the three terminal pathways of aromatic amino acid biosynthesis. This reaction introduces a second double bond into the aromatic ring system. This chain is Chorismate synthase, found in Ruegeria sp. (strain TM1040) (Silicibacter sp.).